The following is a 204-amino-acid chain: Protein OPG030 (204 aa).

The BACK domain maps to 95–177 (FLRQYINNNI…ITYSELTNAI (83 aa)).

Belongs to the orthopoxvirus OPG030 family.

The sequence is that of Protein OPG030 (OPG30) from Homo sapiens (Human).